The following is a 958-amino-acid chain: Unconventional myosin-Ih (958 aa).

Positions 12–691 constitute a Myosin motor domain; it reads GVQDFVLLDA…TLFATEDAFE (680 aa). Residue 105-112 coordinates ATP; sequence GESGAGKT. Serine 365 bears the Phosphoserine mark. Residues 568–590 form an actin-binding region; it reads LSSLLEILISKEPSYIRCIKPNE. IQ domains lie at 694–716 and 717–746; these read KHQL…EYMK and KRQA…AVQI. The region spanning 773 to 955 is the TH1 domain; sequence RKNYILNLRY…NGQLRVVSAG (183 aa).

Belongs to the TRAFAC class myosin-kinesin ATPase superfamily. Myosin family. Highly expressed in the central nervous system, including the forebrain, midbrain and lower medulla. In the lower medulla, it is broadly expressed throughout the reticular formation. It is expressed in the retrotrapezoid nucleus and the nucleus of the solitary tract, as well as motor neurons of the facial, vagal and ambiguus nuclei. Expressed in neonatal inner-ear organs.

Functionally, myosins are actin-based motor molecules with ATPase activity. Unconventional myosins serve in intracellular movements. Their highly divergent tails are presumed to bind to membranous compartments, which would be moved relative to actin filaments. The polypeptide is Unconventional myosin-Ih (Myo1h) (Mus musculus (Mouse)).